Consider the following 126-residue polypeptide: MFRTLLKSKIHRVAVTHCELHYEGSCAIDEDLLDAANIAENEQIHIWNINNGERFVTYAIKGERGSGMISVNGSAARRAAAGDLIIIAAFAQVHNDQVSAHEPQLVFVDDKNRQTELRHKVPTQRM.

The active-site Schiff-base intermediate with substrate; via pyruvic acid is Ser25. Ser25 bears the Pyruvic acid (Ser) mark. Thr57 is a binding site for substrate. Tyr58 functions as the Proton donor in the catalytic mechanism. 73-75 (GSA) is a substrate binding site.

It belongs to the PanD family. As to quaternary structure, heterooctamer of four alpha and four beta subunits. Pyruvate is required as a cofactor. Is synthesized initially as an inactive proenzyme, which is activated by self-cleavage at a specific serine bond to produce a beta-subunit with a hydroxyl group at its C-terminus and an alpha-subunit with a pyruvoyl group at its N-terminus.

It localises to the cytoplasm. The enzyme catalyses L-aspartate + H(+) = beta-alanine + CO2. It functions in the pathway cofactor biosynthesis; (R)-pantothenate biosynthesis; beta-alanine from L-aspartate: step 1/1. Functionally, catalyzes the pyruvoyl-dependent decarboxylation of aspartate to produce beta-alanine. The sequence is that of Aspartate 1-decarboxylase 2 from Polaromonas sp. (strain JS666 / ATCC BAA-500).